Reading from the N-terminus, the 447-residue chain is Omega-6 fatty acid desaturase, chloroplastic (447 aa).

The N-terminal 65 residues, 1-65, are a transit peptide targeting the chloroplast; the sequence is MESAITISNH…TRRKSTLVQA (65 aa). Position 66 is an N-acetylvaline (V66). Residues 171-175 carry the Histidine box-1 motif; the sequence is HDCAH. The short motif at 207 to 211 is the Histidine box-2 element; that stretch reads HDQHH. The short motif at 367 to 371 is the Histidine box-3 element; that stretch reads HIPHH.

The protein belongs to the fatty acid desaturase type 1 family.

It localises to the plastid. Its subcellular location is the chloroplast membrane. The enzyme catalyses a (9Z)-octadecenoyl-containing glycerolipid + 2 reduced [2Fe-2S]-[ferredoxin] + O2 + 2 H(+) = a (9Z,12Z)-octadecadienoyl-containing glycerolipid + 2 oxidized [2Fe-2S]-[ferredoxin] + 2 H2O. The protein operates within lipid metabolism; polyunsaturated fatty acid biosynthesis. Functionally, chloroplast omega-6 fatty acid desaturase introduces the second double bond in the biosynthesis of 16:3 and 18:3 fatty acids, important constituents of plant membranes. It is thought to use ferredoxin as an electron donor and to act on fatty acids esterified to galactolipids, sulfolipids and phosphatidylglycerol. The protein is Omega-6 fatty acid desaturase, chloroplastic of Spinacia oleracea (Spinach).